Here is a 164-residue protein sequence, read N- to C-terminus: Phosphopantetheine adenylyltransferase (164 aa).

Serine 9 is a binding site for substrate. ATP is bound by residues 9–10 and histidine 17; that span reads SF. 3 residues coordinate substrate: lysine 41, valine 78, and arginine 92. Residues 93–95, glutamate 103, and 128–134 contribute to the ATP site; these read GLR and VRTITAT.

Belongs to the bacterial CoaD family. As to quaternary structure, homohexamer. It depends on Mg(2+) as a cofactor.

The protein resides in the cytoplasm. It carries out the reaction (R)-4'-phosphopantetheine + ATP + H(+) = 3'-dephospho-CoA + diphosphate. It functions in the pathway cofactor biosynthesis; coenzyme A biosynthesis; CoA from (R)-pantothenate: step 4/5. Its function is as follows. Reversibly transfers an adenylyl group from ATP to 4'-phosphopantetheine, yielding dephospho-CoA (dPCoA) and pyrophosphate. The polypeptide is Phosphopantetheine adenylyltransferase (Brucella abortus (strain 2308)).